The sequence spans 375 residues: tRNA-specific 2-thiouridylase MnmA (375 aa).

ATP-binding positions include 17–24 and methionine 43; that span reads GMSGGVDS. Residues 103 to 105 form an interaction with target base in tRNA region; the sequence is NPD. Cysteine 108 functions as the Nucleophile in the catalytic mechanism. Cysteine 108 and cysteine 204 are disulfide-bonded. Glycine 132 contributes to the ATP binding site. An interaction with tRNA region spans residues 154–156; it reads KDQ. Residue cysteine 204 is the Cysteine persulfide intermediate of the active site. Residues 316 to 317 are interaction with tRNA; the sequence is RY.

The protein belongs to the MnmA/TRMU family.

Its subcellular location is the cytoplasm. It carries out the reaction S-sulfanyl-L-cysteinyl-[protein] + uridine(34) in tRNA + AH2 + ATP = 2-thiouridine(34) in tRNA + L-cysteinyl-[protein] + A + AMP + diphosphate + H(+). Its function is as follows. Catalyzes the 2-thiolation of uridine at the wobble position (U34) of tRNA, leading to the formation of s(2)U34. The sequence is that of tRNA-specific 2-thiouridylase MnmA from Stutzerimonas stutzeri (strain A1501) (Pseudomonas stutzeri).